The following is a 396-amino-acid chain: Zinc metalloproteinase nas-19 (396 aa).

An N-terminal signal peptide occupies residues 1–20 (MVRLIHLIGAIILLFSYAYC). The Peptidase M12A domain occupies 38–231 (RVKRQFERLG…YKINQYYGCW (194 aa)). An N-linked (GlcNAc...) asparagine glycan is attached at asparagine 79. 4 cysteine pairs are disulfide-bonded: cysteine 82–cysteine 230, cysteine 105–cysteine 130, cysteine 232–cysteine 252, and cysteine 254–cysteine 263. Histidine 138 serves as a coordination point for Zn(2+). Residue glutamate 139 is part of the active site. The Zn(2+) site is built by histidine 142 and histidine 148. One can recognise an EGF-like domain in the interval 225–264 (NQYYGCWCSKQLECKNGGYTSPSDCSRCNCPKGFFGNLCD). Asparagine 310 is a glycosylation site (N-linked (GlcNAc...) asparagine).

Zn(2+) is required as a cofactor.

The protein resides in the secreted. Metalloprotease. The chain is Zinc metalloproteinase nas-19 (nas-19) from Caenorhabditis elegans.